Consider the following 346-residue polypeptide: MNPHATPVLVLSLALGTTITISSNHWVLAWTGLEINTLAIIPLISKSHHPRAVEAATKYFLTQAAASALVLFSSMTNAWATGQWDITQLNHPTSCLLLTAAIAIKLGLVPFHFWFPEVLQGSPLMTALLLSTLMKFPPLTLLLMTSKSLNPALLTTMALASAALGGWMGLNQTQTRKILAFSSISHLGWIAIILVYSPKLALLTFYLYTIMTSAVFMALNKIKALNLSMVLTSWTKTPVLNATLMLVLLSLAGLPPLTGFMPKWLIIQELTKQEMTPAAMAIAMLSLLSLFFYLRLAYHSTITLPPNSSNHMKQWYTSKPPSTPTAILASLSILLLPLSPMIHAIV.

A run of 11 helical transmembrane segments spans residues 1–21 (MNPH…TITI), 25–45 (HWVL…PLIS), 60–80 (FLTQ…NAWA), 95–115 (CLLL…HFWF), 124–144 (LMTA…LLLM), 149–169 (LNPA…GWMG), 178–195 (ILAF…IILV), 200–219 (LALL…FMAL), 242–262 (ATLM…GFMP), 274–294 (EMTP…FFYL), and 326–346 (AILA…HAIV).

The protein belongs to the complex I subunit 2 family.

It localises to the mitochondrion inner membrane. It catalyses the reaction a ubiquinone + NADH + 5 H(+)(in) = a ubiquinol + NAD(+) + 4 H(+)(out). In terms of biological role, core subunit of the mitochondrial membrane respiratory chain NADH dehydrogenase (Complex I) that is believed to belong to the minimal assembly required for catalysis. Complex I functions in the transfer of electrons from NADH to the respiratory chain. The immediate electron acceptor for the enzyme is believed to be ubiquinone. This is NADH-ubiquinone oxidoreductase chain 2 (MT-ND2) from Mareca americana (American wigeon).